The sequence spans 1055 residues: Vacuolar protein sorting-associated protein 54 (1055 aa).

The stretch at 363 to 383 (TKKIIEVHQKYEQKKHLLAKL) forms a coiled coil. A disordered region spans residues 774–794 (IDDGPTKKPFKRTGSSATIDS).

This sequence belongs to the VPS54 family. Component of the Golgi-associated retrograde protein (GARP) complex, also called VFT (VPS fifty-three) complex, composed of VPS51, VPS52, VPS53 and VPS54.

The protein resides in the golgi apparatus. It localises to the trans-Golgi network. Functionally, acts as a component of the GARP complex that is involved in retrograde transport from early and late endosomes to the trans-Golgi network (TGN). The GARP complex facilitates tethering as well as SNARE complex assembly at the Golgi. In Caenorhabditis briggsae, this protein is Vacuolar protein sorting-associated protein 54 (vps-54).